Here is a 396-residue protein sequence, read N- to C-terminus: Immunoglobulin heavy constant gamma 4 (396 aa).

Positions 1–98 are CH1; it reads ASTKGPSVFP…PSNTKVDKRV (98 aa). The Extracellular portion of the chain corresponds to 1 to 347; it reads ASTKGPSVFP…DGELDGLWTT (347 aa). Ig-like domains lie at 6 to 99, 118 to 217, and 226 to 322; these read PSVF…KRVE, PSVF…KTIS, and PQVY…KSLS. Cysteines 27 and 83 form a disulfide. A hinge region spans residues 99-110; the sequence is ESKYGPPCPSCP. The CH2 stretch occupies residues 111–220; the sequence is APEFLGGPSV…SIEKTISKAK (110 aa). Cystine bridges form between Cys141–Cys201 and Cys247–Cys305. Asn177 carries N-linked (GlcNAc...) (complex) asparagine glycosylation. Positions 221–327 are CH3; sequence GQPREPQVYT…QKSLSLSLEL (107 aa). Residues 348–368 form a helical membrane-spanning segment; the sequence is ITIFITLFLLSVCYSATVTFF. The Cytoplasmic portion of the chain corresponds to 369–396; that stretch reads KVKWIFSSVVDLKQTIVPDYRNMIRQGA.

As to quaternary structure, immunoglobulins are composed of two identical heavy chains and two identical light chains; disulfide-linked. In terms of processing, glycosylation on Asn-177 is required for interaction with Fc receptors and ability to activate the complement pathway. Post-translationally, (Microbial infection) Deglycosylation on Asn-177 by S.pyogenes EndoS or Endos2 endoglucosidases prevents interaction between immunoglobulin-gamma (IgG) and Fc receptors, impairing ability to activate the complement pathway.

Its subcellular location is the secreted. The protein resides in the cell membrane. Its function is as follows. Constant region of immunoglobulin heavy chains. Immunoglobulins, also known as antibodies, are membrane-bound or secreted glycoproteins produced by B lymphocytes. In the recognition phase of humoral immunity, the membrane-bound immunoglobulins serve as receptors which, upon binding of a specific antigen, trigger the clonal expansion and differentiation of B lymphocytes into immunoglobulins-secreting plasma cells. Secreted immunoglobulins mediate the effector phase of humoral immunity, which results in the elimination of bound antigens. The antigen binding site is formed by the variable domain of one heavy chain, together with that of its associated light chain. Thus, each immunoglobulin has two antigen binding sites with remarkable affinity for a particular antigen. The variable domains are assembled by a process called V-(D)-J rearrangement and can then be subjected to somatic hypermutations which, after exposure to antigen and selection, allow affinity maturation for a particular antigen. This is Immunoglobulin heavy constant gamma 4 from Homo sapiens (Human).